The chain runs to 198 residues: Pyridoxal 5'-phosphate synthase subunit PdxT (198 aa).

Residue 50-52 (GES) participates in L-glutamine binding. Cysteine 82 (nucleophile) is an active-site residue. Residues arginine 114 and 143 to 144 (IR) contribute to the L-glutamine site. Residues histidine 179 and glutamate 181 each act as charge relay system in the active site.

It belongs to the glutaminase PdxT/SNO family. In the presence of PdxS, forms a dodecamer of heterodimers. Only shows activity in the heterodimer.

The catalysed reaction is aldehydo-D-ribose 5-phosphate + D-glyceraldehyde 3-phosphate + L-glutamine = pyridoxal 5'-phosphate + L-glutamate + phosphate + 3 H2O + H(+). The enzyme catalyses L-glutamine + H2O = L-glutamate + NH4(+). The protein operates within cofactor biosynthesis; pyridoxal 5'-phosphate biosynthesis. Its function is as follows. Catalyzes the hydrolysis of glutamine to glutamate and ammonia as part of the biosynthesis of pyridoxal 5'-phosphate. The resulting ammonia molecule is channeled to the active site of PdxS. The chain is Pyridoxal 5'-phosphate synthase subunit PdxT from Metallosphaera sedula (strain ATCC 51363 / DSM 5348 / JCM 9185 / NBRC 15509 / TH2).